A 335-amino-acid polypeptide reads, in one-letter code: Serpentine receptor class XA 10 (335 aa).

The Extracellular portion of the chain corresponds to 1–10 (MDVDAAVVKR). Residues 11–31 (IALWVYETCSVFNLFYCITLS) traverse the membrane as a helical segment. Over 32 to 46 (LAIKTSKNNALPATY) the chain is Cytoplasmic. The helical transmembrane segment at 47 to 67 (IYNMAISNALLVIFGIMVYIL) threads the bilayer. Over 68–82 (PYYMSDKTYKTYRDS) the chain is Extracellular. Residues 83–103 (IGAMISVGVTFNYLHPMLTLI) traverse the membrane as a helical segment. The Cytoplasmic portion of the chain corresponds to 104–126 (LMTINRIAVVVSMQASQLFTSSK). A helical membrane pass occupies residues 127–147 (IWLYTSFHMTANFACLIIPYL). Residues 148–177 (SECRINYDIRKVGFISECAPDRHQITTFSN) lie on the Extracellular side of the membrane. A helical membrane pass occupies residues 178–198 (YYSVFFPFVAFFFNVLVIINF). The Cytoplasmic portion of the chain corresponds to 199-238 (KLQRSPTYTKIKNMFRRGNGDQFTSMPSDVLKAKKKTERM). Residues 239 to 259 (LMIQAFITAFYLSVYELTSLV) traverse the membrane as a helical segment. The Extracellular segment spans residues 260 to 276 (LRVVPELFGNLSLDGKL). A helical transmembrane segment spans residues 277–297 (AFTYFRLAQVPCHVFLVYFIF). Residues 298-319 (TPVTRKIYMDFVRERVFCMKPA) lie on the Cytoplasmic side of the membrane.

Belongs to the nematode receptor-like protein srxa family.

It localises to the membrane. This Caenorhabditis elegans protein is Serpentine receptor class XA 10 (srxa-10).